The sequence spans 177 residues: MNNIGEIISNFEGIIGALLGVIVTLILTHILKHFGQIKFYIVDFEIYFKTDNDGWGTNVMPSKDEAKQIEIHSQIEIYNGAEIPKVLREIKFCFYKNTNLIVSVTPDDKATTEEFAEFGYYRDKLFNINLPSKQIIAINIIKFLNEKETKQVKKCNRVYLEAKDHNGKMYKVFLGEF.

A helical membrane pass occupies residues 11-31; sequence FEGIIGALLGVIVTLILTHIL.

The protein localises to the cell membrane. In Bacillus subtilis (strain 168), this protein is SPbeta prophage-derived uncharacterized protein YopI (yopI).